Consider the following 476-residue polypeptide: Adenosylhomocysteinase (476 aa).

3 residues coordinate substrate: T62, D141, and E201. 202–204 (TTT) contacts NAD(+). Substrate is bound by residues K231 and D235. NAD(+)-binding positions include N236, 265 to 270 (GYGDVG), E288, N323, 344 to 346 (IGH), and N389.

Belongs to the adenosylhomocysteinase family. NAD(+) serves as cofactor.

Its subcellular location is the cytoplasm. It carries out the reaction S-adenosyl-L-homocysteine + H2O = L-homocysteine + adenosine. The protein operates within amino-acid biosynthesis; L-homocysteine biosynthesis; L-homocysteine from S-adenosyl-L-homocysteine: step 1/1. May play a key role in the regulation of the intracellular concentration of adenosylhomocysteine. This chain is Adenosylhomocysteinase, found in Delftia acidovorans (strain DSM 14801 / SPH-1).